The chain runs to 169 residues: Ribosome maturation factor RimM (169 aa).

Residues 91-167 (EGEYYFADLI…RIVIATDFAH (77 aa)) form the PRC barrel domain.

Belongs to the RimM family. Binds ribosomal protein uS19.

Its subcellular location is the cytoplasm. In terms of biological role, an accessory protein needed during the final step in the assembly of 30S ribosomal subunit, possibly for assembly of the head region. Essential for efficient processing of 16S rRNA. May be needed both before and after RbfA during the maturation of 16S rRNA. It has affinity for free ribosomal 30S subunits but not for 70S ribosomes. This Erythrobacter litoralis (strain HTCC2594) protein is Ribosome maturation factor RimM.